A 196-amino-acid chain; its full sequence is MLLLLKKIYLTFARSSRIIITLVIIDQLSKWWFIDNLRWKPGLMLKVTAFLNMVYTWNYGISFGLMREYYQYSNAVFILTNSIIVCYLYYLMVCSKTIRGFAGYSFVIGGAVGNLIDRLFRGAVFDFIHFYYKNYSFPVFNLADCFITIGVIILIEDYYSTKKIIEEKAKEHYDNAQIKAMAEKIRNTDHNGDNKI.

A run of 3 helical transmembrane segments spans residues 43 to 63 (LMLK…GISF), 75 to 95 (AVFI…MVCS), and 100 to 120 (GFAG…DRLF). Residues Asp-126 and Asp-144 contribute to the active site. A helical transmembrane segment spans residues 135-155 (YSFPVFNLADCFITIGVIILI).

The protein belongs to the peptidase A8 family.

It localises to the cell inner membrane. It carries out the reaction Release of signal peptides from bacterial membrane prolipoproteins. Hydrolyzes -Xaa-Yaa-Zaa-|-(S,diacylglyceryl)Cys-, in which Xaa is hydrophobic (preferably Leu), and Yaa (Ala or Ser) and Zaa (Gly or Ala) have small, neutral side chains.. It functions in the pathway protein modification; lipoprotein biosynthesis (signal peptide cleavage). Functionally, this protein specifically catalyzes the removal of signal peptides from prolipoproteins. The chain is Lipoprotein signal peptidase from Rickettsia canadensis (strain McKiel).